A 124-amino-acid chain; its full sequence is Large ribosomal subunit protein bL12 (124 aa).

The protein belongs to the bacterial ribosomal protein bL12 family. As to quaternary structure, homodimer. Part of the ribosomal stalk of the 50S ribosomal subunit. Forms a multimeric L10(L12)X complex, where L10 forms an elongated spine to which 2 to 4 L12 dimers bind in a sequential fashion. Binds GTP-bound translation factors.

Its function is as follows. Forms part of the ribosomal stalk which helps the ribosome interact with GTP-bound translation factors. Is thus essential for accurate translation. The sequence is that of Large ribosomal subunit protein bL12 from Ralstonia nicotianae (strain ATCC BAA-1114 / GMI1000) (Ralstonia solanacearum).